Reading from the N-terminus, the 1025-residue chain is Multidrug resistance protein MdtC (1025 aa).

Helical transmembrane passes span 3 to 23 (FFALFIYRPVATILLSVAITL), 333 to 353 (EVEQTLIISVALVILVVFLFL), 360 to 380 (IIPAVAVPVSLIGTFAAMYLC), 387 to 407 (LSLMALTIATGFVVDDAIVVL), 431 to 451 (VGFTVLSMSLSLVAVFLPLLL), 463 to 483 (FAVTLSVAIGISLLVSLTLTP), 528 to 548 (LVGMVLLGTIALNIWLYISIP), 853 to 873 (VILIIAAIATVYIVLGILYES), 875 to 895 (VHPLTILSTLPSAGVGALLAL), 897 to 917 (LFNAPFSLIALIGIMLLIGIV), 953 to 973 (PIMMTTLAALFGALPLVLSGG), and 984 to 1004 (ITIVGGLVMSQLLTLYTTPVV).

This sequence belongs to the resistance-nodulation-cell division (RND) (TC 2.A.6) family. MdtC subfamily. As to quaternary structure, part of a tripartite efflux system composed of MdtA, MdtB and MdtC. MdtC forms a heteromultimer with MdtB.

Its subcellular location is the cell inner membrane. The MdtABC tripartite complex confers resistance against novobiocin and deoxycholate. The sequence is that of Multidrug resistance protein MdtC from Escherichia coli O157:H7 (strain EC4115 / EHEC).